The chain runs to 378 residues: Mannitol-1-phosphate 5-dehydrogenase (378 aa).

Serine 4 to glycine 15 lines the NAD(+) pocket.

It belongs to the mannitol dehydrogenase family.

The enzyme catalyses D-mannitol 1-phosphate + NAD(+) = beta-D-fructose 6-phosphate + NADH + H(+). The polypeptide is Mannitol-1-phosphate 5-dehydrogenase (Streptococcus pneumoniae (strain ATCC BAA-255 / R6)).